A 336-amino-acid chain; its full sequence is Dihydroorotate dehydrogenase (quinone) (336 aa).

FMN contacts are provided by residues 62–66 and Thr-86; that span reads AGLDK. Lys-66 lines the substrate pocket. Residue 111–115 coordinates substrate; the sequence is NRMGF. 2 residues coordinate FMN: Asn-139 and Asn-172. Asn-172 contributes to the substrate binding site. The active-site Nucleophile is Ser-175. Residue Asn-177 participates in substrate binding. The FMN site is built by Lys-217 and Thr-245. Residue 246 to 247 coordinates substrate; that stretch reads NT. FMN-binding positions include Gly-268, Gly-297, and 318 to 319; that span reads YT.

The protein belongs to the dihydroorotate dehydrogenase family. Type 2 subfamily. In terms of assembly, monomer. It depends on FMN as a cofactor.

The protein resides in the cell membrane. The enzyme catalyses (S)-dihydroorotate + a quinone = orotate + a quinol. The protein operates within pyrimidine metabolism; UMP biosynthesis via de novo pathway; orotate from (S)-dihydroorotate (quinone route): step 1/1. Its function is as follows. Catalyzes the conversion of dihydroorotate to orotate with quinone as electron acceptor. This chain is Dihydroorotate dehydrogenase (quinone), found in Vibrio parahaemolyticus serotype O3:K6 (strain RIMD 2210633).